The chain runs to 237 residues: Purine nucleoside phosphorylase DeoD-type (237 aa).

Residue His4 coordinates a purine D-ribonucleoside. Residues Gly20, Arg24, Arg43, and 87–90 each bind phosphate; that span reads RVGT. A purine D-ribonucleoside-binding positions include 179-181 and 203-204; these read EME and SD. Asp204 (proton donor) is an active-site residue.

This sequence belongs to the PNP/UDP phosphorylase family. In terms of assembly, homohexamer; trimer of homodimers.

The enzyme catalyses a purine D-ribonucleoside + phosphate = a purine nucleobase + alpha-D-ribose 1-phosphate. The catalysed reaction is a purine 2'-deoxy-D-ribonucleoside + phosphate = a purine nucleobase + 2-deoxy-alpha-D-ribose 1-phosphate. In terms of biological role, catalyzes the reversible phosphorolytic breakdown of the N-glycosidic bond in the beta-(deoxy)ribonucleoside molecules, with the formation of the corresponding free purine bases and pentose-1-phosphate. The chain is Purine nucleoside phosphorylase DeoD-type from Streptococcus pyogenes serotype M5 (strain Manfredo).